A 200-amino-acid chain; its full sequence is Probable GTP-binding protein EngB (200 aa).

The 176-residue stretch at 22 to 197 (DLPEIAFAGR…WQAIQDAVEE (176 aa)) folds into the EngB-type G domain. GTP is bound by residues 30 to 37 (GRSNVGKS), 57 to 61 (GRTQL), 78 to 81 (DLPG), 145 to 148 (TKCD), and 176 to 178 (FSA). S37 and T59 together coordinate Mg(2+).

Belongs to the TRAFAC class TrmE-Era-EngA-EngB-Septin-like GTPase superfamily. EngB GTPase family. Requires Mg(2+) as cofactor.

Functionally, necessary for normal cell division and for the maintenance of normal septation. The sequence is that of Probable GTP-binding protein EngB from Trichlorobacter lovleyi (strain ATCC BAA-1151 / DSM 17278 / SZ) (Geobacter lovleyi).